A 338-amino-acid chain; its full sequence is (2Z,6E)-hedycaryol synthase (338 aa).

The Mg(2+) site is built by Asp-82 and Glu-87. The DDXXXE motif motif lies at 82–87 (DDQIDE). Arg-175 provides a ligand contact to substrate. Mg(2+)-binding residues include Asn-221 and Ser-225. Positions 221-229 (NDVFSVERE) match the NXXXSXXXE motif motif. Arg-228 is a binding site for substrate. Glu-229 is a Mg(2+) binding site.

Belongs to the terpene synthase family. As to quaternary structure, homodimer. Mg(2+) is required as a cofactor.

It catalyses the reaction (2E,6E)-farnesyl diphosphate + H2O = (2Z,6E)-hedycaryol + diphosphate. It functions in the pathway secondary metabolite biosynthesis; terpenoid biosynthesis. Catalyzes the conversion of (2E,6E)-farnesyl diphosphate (FPP) into (2Z,6E)-hedycaryol via a 1,11-cyclization. This is (2Z,6E)-hedycaryol synthase from Kitasatospora setae (strain ATCC 33774 / DSM 43861 / JCM 3304 / KCC A-0304 / NBRC 14216 / KM-6054) (Streptomyces setae).